The chain runs to 195 residues: ATP-dependent Clp protease proteolytic subunit 2 (195 aa).

The active-site Nucleophile is Ser-95. His-120 is a catalytic residue.

This sequence belongs to the peptidase S14 family. As to quaternary structure, fourteen ClpP subunits assemble into 2 heptameric rings which stack back to back to give a disk-like structure with a central cavity, resembling the structure of eukaryotic proteasomes.

It is found in the cytoplasm. It carries out the reaction Hydrolysis of proteins to small peptides in the presence of ATP and magnesium. alpha-casein is the usual test substrate. In the absence of ATP, only oligopeptides shorter than five residues are hydrolyzed (such as succinyl-Leu-Tyr-|-NHMec, and Leu-Tyr-Leu-|-Tyr-Trp, in which cleavage of the -Tyr-|-Leu- and -Tyr-|-Trp bonds also occurs).. In terms of biological role, cleaves peptides in various proteins in a process that requires ATP hydrolysis. Has a chymotrypsin-like activity. Plays a major role in the degradation of misfolded proteins. The protein is ATP-dependent Clp protease proteolytic subunit 2 of Methylococcus capsulatus (strain ATCC 33009 / NCIMB 11132 / Bath).